The chain runs to 910 residues: Inactive disease susceptibility protein LOV1 (910 aa).

Residues Ala22–Asn60 are a coiled coil. An NB-ARC domain is found at Glu169–Asp461. LRR repeat units follow at residues Leu584 to Leu609, Ile610 to Leu632, and Leu634 to Met655.

It belongs to the disease resistance NB-LRR family. RPP8/HRT subfamily.

This chain is Inactive disease susceptibility protein LOV1 (LOV1), found in Arabidopsis thaliana (Mouse-ear cress).